The sequence spans 504 residues: Cytochrome P450 monooxygenase gliF (504 aa).

The helical transmembrane segment at alanine 13–leucine 31 threads the bilayer. 2 N-linked (GlcNAc...) asparagine glycosylation sites follow: asparagine 197 and asparagine 299. Cysteine 449 serves as a coordination point for heme.

This sequence belongs to the cytochrome P450 family. It depends on heme as a cofactor.

It is found in the membrane. Its pathway is mycotoxin biosynthesis. Cytochrome P450 monooxygenase; part of the gene cluster that mediates the biosynthesis of gliotoxin, a member of the epipolythiodioxopiperazine (ETP) class of toxins characterized by a disulfide bridged cyclic dipeptide. The first step in gliotoxin biosynthesis is the condensation of serine and phenylalanine to form the cyclo-L-phenylalanyl-L-serine diketopiperazine (DKP) by the NRPS gliP. GliP is also able to produce the DKP cyclo-L-tryptophanyl-L-serine, suggesting that the substrate specificity of the first adenylation (A) domain in gliP is sufficiently relaxed to accommodate both L-Phe and L-Trp. The cytochrome P450 monooxygenase gliC has been shown to catalyze the subsequent hydroxylation of the alpha-carbon of L-Phe in cyclo-L-phenylalanyl-L-serine whereas the second cytochrome P450 enzyme, gliF, is presumably involved in the modification of the DKP side chain. The glutathione S-transferase (GST) gliG then forms a bis-glutathionylated biosynthetic intermediate which is responsible for the sulfurization of gliotoxin. This bis-glutathionylated intermediate is subsequently processed by the gamma-glutamyl cyclotransferase gliK to remove both gamma-glutamyl moieties. Subsequent processing via gliI yields a biosynthetic intermediate, which is N-methylated via the N-methyltransferase gliN, before the gliotoxin oxidoreductase gliT-mediated disulfide bridge closure. GliN-mediated amide methylation confers stability to ETP, damping the spontaneous formation of tri- and tetrasulfides. Intracellular dithiol gliotoxin oxidized by gliT is subsequently effluxed by gliA. Gliotoxin contributes to pathogenesis during invasive aspergillosis. In macrophages and neutrophils, gliotoxin showed inhibition of various different cell functions including cytokine production, antigen presentation, phagocytosis, and production of reactive oxygen species. The sequence is that of Cytochrome P450 monooxygenase gliF from Aspergillus fumigatus (strain ATCC MYA-4609 / CBS 101355 / FGSC A1100 / Af293) (Neosartorya fumigata).